The primary structure comprises 287 residues: Ribosomal RNA small subunit methyltransferase A (287 aa).

6 residues coordinate S-adenosyl-L-methionine: Asn-28, Leu-30, Gly-55, Glu-77, Asp-103, and Asn-123.

Belongs to the class I-like SAM-binding methyltransferase superfamily. rRNA adenine N(6)-methyltransferase family. RsmA subfamily.

It localises to the cytoplasm. The catalysed reaction is adenosine(1518)/adenosine(1519) in 16S rRNA + 4 S-adenosyl-L-methionine = N(6)-dimethyladenosine(1518)/N(6)-dimethyladenosine(1519) in 16S rRNA + 4 S-adenosyl-L-homocysteine + 4 H(+). Functionally, specifically dimethylates two adjacent adenosines (A1518 and A1519) in the loop of a conserved hairpin near the 3'-end of 16S rRNA in the 30S particle. May play a critical role in biogenesis of 30S subunits. The chain is Ribosomal RNA small subunit methyltransferase A from Rhodopseudomonas palustris (strain BisB5).